A 187-amino-acid polypeptide reads, in one-letter code: MKGSSEHGETSKQAPLGSSRGVSKGVSVLDLILRFIAIIGTLASAIAMGTTNETLPFFTQFIRFKAQYSDLPTLTFFVVANSIVCAYLTLSLPLSIVHIIRSRAKYSRLLLVVLDAAMLALVTPGASAAAAIVYLAHKGNVRANWLAICQQFDSFCERISGCLIGSFGAMVMLVLLLLLSAIALARR.

Residues 1–10 are compositionally biased toward basic and acidic residues; that stretch reads MKGSSEHGET. The tract at residues 1-20 is disordered; it reads MKGSSEHGETSKQAPLGSSR. At 1-27 the chain is on the cytoplasmic side; the sequence is MKGSSEHGETSKQAPLGSSRGVSKGVS. Residues 28–48 form a helical membrane-spanning segment; it reads VLDLILRFIAIIGTLASAIAM. The Extracellular portion of the chain corresponds to 49-75; that stretch reads GTTNETLPFFTQFIRFKAQYSDLPTLT. N52 is a glycosylation site (N-linked (GlcNAc...) asparagine). A helical membrane pass occupies residues 76 to 96; the sequence is FFVVANSIVCAYLTLSLPLSI. Residues 97–115 lie on the Cytoplasmic side of the membrane; it reads VHIIRSRAKYSRLLLVVLD. A helical transmembrane segment spans residues 116 to 136; that stretch reads AAMLALVTPGASAAAAIVYLA. The Extracellular portion of the chain corresponds to 137–162; the sequence is HKGNVRANWLAICQQFDSFCERISGC. Residues 163-183 traverse the membrane as a helical segment; it reads LIGSFGAMVMLVLLLLLSAIA. Over 184-187 the chain is Cytoplasmic; it reads LARR.

It belongs to the Casparian strip membrane proteins (CASP) family. As to quaternary structure, homodimer and heterodimers.

It localises to the cell membrane. Functionally, regulates membrane-cell wall junctions and localized cell wall deposition. Required for establishment of the Casparian strip membrane domain (CSD) and the subsequent formation of Casparian strips, a cell wall modification of the root endodermis that determines an apoplastic barrier between the intraorganismal apoplasm and the extraorganismal apoplasm and prevents lateral diffusion. This chain is Casparian strip membrane protein 1, found in Zea mays (Maize).